Here is a 186-residue protein sequence, read N- to C-terminus: Dirigent protein 4 (186 aa).

A signal peptide spans 1-20 (MGKNLGLVVSFYLCITFALG). N-linked (GlcNAc...) asparagine glycans are attached at residues asparagine 67, asparagine 126, asparagine 169, and asparagine 180.

This sequence belongs to the plant dirigent protein family. As to quaternary structure, homodimer.

It localises to the secreted. The protein resides in the extracellular space. Its subcellular location is the apoplast. Dirigent proteins impart stereoselectivity on the phenoxy radical-coupling reaction, yielding optically active lignans from two molecules of coniferyl alcohol in the biosynthesis of lignans, flavonolignans, and alkaloids and thus plays a central role in plant secondary metabolism. The sequence is that of Dirigent protein 4 (DIR4) from Arabidopsis thaliana (Mouse-ear cress).